Consider the following 1242-residue polypeptide: DNA-directed RNA polymerase RPB2 homolog (1242 aa).

The C4-type zinc finger occupies 1180 to 1201; sequence CRNCGEPAIYNASHPIYKCMNC.

Belongs to the RNA polymerase beta chain family. Part of the viral DNA-directed RNA polymerase that consists of 8 polII-like subunits (RPB1, RPB2, RPB3, RPB5, RPB6, RPB7, RPB9, RPB10), a capping enzyme and a termination factor.

The protein resides in the host cytoplasm. Its subcellular location is the virion. It catalyses the reaction RNA(n) + a ribonucleoside 5'-triphosphate = RNA(n+1) + diphosphate. Functionally, catalytic component of the DNA-directed RNA polymerase (RNAP) that catalyzes the transcription in the cytoplasm of viral DNA into RNA using the four ribonucleoside triphosphates as substrates. Forms the polymerase active center together with RPB1. Part of the core element with the central large cleft, the clamp element that moves to open and close the cleft and the jaws that are thought to grab the incoming DNA template. This Ornithodoros (relapsing fever ticks) protein is DNA-directed RNA polymerase RPB2 homolog.